Reading from the N-terminus, the 747-residue chain is H(+)/Cl(-) exchange transporter 4 (747 aa).

Residues 1-50 (MDFLEEPFPDVGTYEDFHTIDWLREKSRDTDRHRKITSKSKESIWEFIKS) form a required for localization in the endoplasmic reticulum region. Topologically, residues 1–54 (MDFLEEPFPDVGTYEDFHTIDWLREKSRDTDRHRKITSKSKESIWEFIKSLLDA) are cytoplasmic. The next 2 helical transmembrane spans lie at 55 to 92 (WSGW…VCLS) and 138 to 161 (LNYL…VRVF). A Selectivity filter part_1 motif is present at residues 167-171 (GSGIP). Chloride is bound at residue Ser-168. The helical intramembrane region spans 170–177 (IPEIKTIL). A run of 2 helical transmembrane segments spans residues 187–205 (GKWT…VSSG) and 211–230 (EGPL…SLFS). The Selectivity filter part_2 motif lies at 209 to 213 (GKEGP). Intramembrane regions (helical) lie at residues 242–254 (VLSA…VSVA) and 258–266 (PIGGVLFSL). Transmembrane regions (helical) follow at residues 278–296 (LWRS…RSIN), 320–345 (FPFI…AWCR), 352–372 (LGRY…IVAY), 429–449 (MWQL…TFGM), and 454–473 (GLFI…VGIG). Positions 454–458 (GLFIP) match the Selectivity filter part_3 motif. Residue Phe-456 participates in chloride binding. 2 intramembrane regions (helical) span residues 501-515 (GLYA…LGGV) and 519-530 (TVSLVVIMFELT). The segment at residues 531–534 (GGLE) is an intramembrane region (note=Loop between two helices). The chain crosses the membrane as a helical span at residues 535 to 553 (YIVPLMAAAVTSKWVADAF). Over 554–747 (GKEGIYEAHI…NQDPESIMFN (194 aa)) the chain is Cytoplasmic. Tyr-559 serves as a coordination point for chloride. 2 CBS domains span residues 587–653 (MRPR…QRQE) and 680–742 (LRRI…QDPE). ATP-binding positions include Ser-597 and 618 to 620 (YNG). Residues 654-683 (GIVSNSIMYFTEEPPELPANSPHPLKLRRI) are required for localization in the endoplasmic reticulum. 725-728 (TKKD) provides a ligand contact to ATP.

This sequence belongs to the chloride channel (TC 2.A.49) family. ClC-4/CLCN4 subfamily. Predominantly present in excitable tissues such as nervous system and skeletal muscle. Not detected in heart.

It localises to the early endosome membrane. The protein resides in the late endosome membrane. Its subcellular location is the endoplasmic reticulum membrane. It is found in the lysosome membrane. The protein localises to the recycling endosome membrane. In terms of biological role, strongly outwardly rectifying, electrogenic H(+)/Cl(-)exchanger which mediates the exchange of chloride ions against protons. The CLC channel family contains both chloride channels and proton-coupled anion transporters that exchange chloride or another anion for protons. The presence of conserved gating glutamate residues is typical for family members that function as antiporters. In Mus musculus (Mouse), this protein is H(+)/Cl(-) exchange transporter 4 (Clcn4).